The primary structure comprises 26 residues: DDLHPFNENNMYYGCKGLSNSNKFED.

Toxin b is a heterodimer composed of toxin alpha and toxin beta. As to expression, expressed by the venom gland.

Its subcellular location is the secreted. Its function is as follows. Binds to sodium channels (Nav) and affects the channel activation process. In Androctonus crassicauda (Arabian fat-tailed scorpion), this protein is Toxin b subunit alpha.